Consider the following 172-residue polypeptide: Large ribosomal subunit protein uL10 (172 aa).

Belongs to the universal ribosomal protein uL10 family. In terms of assembly, part of the ribosomal stalk of the 50S ribosomal subunit. The N-terminus interacts with L11 and the large rRNA to form the base of the stalk. The C-terminus forms an elongated spine to which L12 dimers bind in a sequential fashion forming a multimeric L10(L12)X complex.

Forms part of the ribosomal stalk, playing a central role in the interaction of the ribosome with GTP-bound translation factors. In Rhizobium etli (strain ATCC 51251 / DSM 11541 / JCM 21823 / NBRC 15573 / CFN 42), this protein is Large ribosomal subunit protein uL10.